The primary structure comprises 306 residues: Oligopeptide transport system permease protein OppB (306 aa).

Residues 1-11 (MLKFILRRCLE) are Cytoplasmic-facing. A helical transmembrane segment spans residues 12–32 (AIPTLFILITISFFMMRLAPG). At 33–99 (SPFTGERTLP…VASSFPVSAK (67 aa)) the chain is on the periplasmic side. The 200-residue stretch at 94–293 (FPVSAKLGAA…ALTILFNAIV (200 aa)) folds into the ABC transmembrane type-1 domain. Residues 100–120 (LGAAAFFLAVILGVSAGVIAA) traverse the membrane as a helical segment. Topologically, residues 121-137 (LKQNTKWDYTVMGLAMT) are cytoplasmic. Residues 138-158 (GVVIPSFVVAPLLVMIFAIIL) traverse the membrane as a helical segment. Topologically, residues 159-169 (HWLPGGGWNGG) are periplasmic. A helical transmembrane segment spans residues 170–190 (ALKFMILPMVALSLAYIASIA). At 191 to 229 (RITRGSMIEVLHSNFIRTARAKGLPMRRIILRHALKPAL) the chain is on the cytoplasmic side. The chain crosses the membrane as a helical span at residues 230 to 250 (LPVLSYMGPAFVGIITGSMVI). Residues 251–279 (ETIYGLPGIGQLFVNGALNRDYSLVLSLT) lie on the Periplasmic side of the membrane. Residues 280 to 300 (ILVGALTILFNAIVDVLYAVI) traverse the membrane as a helical segment. Residues 301-306 (DPKIRY) lie on the Cytoplasmic side of the membrane.

This sequence belongs to the binding-protein-dependent transport system permease family. OppBC subfamily. The complex is composed of two ATP-binding proteins (OppD and OppF), two transmembrane proteins (OppB and OppC) and a solute-binding protein (OppA).

The protein resides in the cell inner membrane. Part of the ABC transporter complex OppABCDF involved in the uptake of oligopeptides. Probably responsible for the translocation of the substrate across the membrane. This chain is Oligopeptide transport system permease protein OppB (oppB), found in Shigella flexneri.